The following is a 180-amino-acid chain: Sec-independent protein translocase protein TatB (180 aa).

The chain crosses the membrane as a helical span at residues 1–21; that stretch reads MFDIGWSELLVIGVVALIAIG. Residues 95-180 are disordered; that stretch reads IEGVDKPVES…AERLKDAKAS (86 aa). Residues 103 to 123 are compositionally biased toward low complexity; the sequence is ESQPAASAAPETSATVEAPAT. The segment covering 170 to 180 has biased composition (basic and acidic residues); that stretch reads EAERLKDAKAS.

The protein belongs to the TatB family. In terms of assembly, the Tat system comprises two distinct complexes: a TatABC complex, containing multiple copies of TatA, TatB and TatC subunits, and a separate TatA complex, containing only TatA subunits. Substrates initially bind to the TatABC complex, which probably triggers association of the separate TatA complex to form the active translocon.

The protein resides in the cell inner membrane. In terms of biological role, part of the twin-arginine translocation (Tat) system that transports large folded proteins containing a characteristic twin-arginine motif in their signal peptide across membranes. Together with TatC, TatB is part of a receptor directly interacting with Tat signal peptides. TatB may form an oligomeric binding site that transiently accommodates folded Tat precursor proteins before their translocation. This chain is Sec-independent protein translocase protein TatB, found in Bradyrhizobium sp. (strain BTAi1 / ATCC BAA-1182).